Reading from the N-terminus, the 465-residue chain is Ribulose bisphosphate carboxylase large chain (465 aa).

Lys4 carries the N6,N6,N6-trimethyllysine modification. 2 residues coordinate substrate: Asn113 and Thr163. Catalysis depends on Lys165, which acts as the Proton acceptor. Lys167 is a substrate binding site. 3 residues coordinate Mg(2+): Lys191, Asp193, and Glu194. N6-carboxylysine is present on Lys191. His284 (proton acceptor) is an active-site residue. Positions 285, 317, and 369 each coordinate substrate.

This sequence belongs to the RuBisCO large chain family. Type I subfamily. Heterohexadecamer of 8 large chains and 8 small chains; disulfide-linked. The disulfide link is formed within the large subunit homodimers. Mg(2+) is required as a cofactor. Post-translationally, the disulfide bond which can form in the large chain dimeric partners within the hexadecamer appears to be associated with oxidative stress and protein turnover.

Its subcellular location is the plastid. It is found in the chloroplast. The catalysed reaction is 2 (2R)-3-phosphoglycerate + 2 H(+) = D-ribulose 1,5-bisphosphate + CO2 + H2O. The enzyme catalyses D-ribulose 1,5-bisphosphate + O2 = 2-phosphoglycolate + (2R)-3-phosphoglycerate + 2 H(+). Its function is as follows. RuBisCO catalyzes two reactions: the carboxylation of D-ribulose 1,5-bisphosphate, the primary event in carbon dioxide fixation, as well as the oxidative fragmentation of the pentose substrate in the photorespiration process. Both reactions occur simultaneously and in competition at the same active site. This chain is Ribulose bisphosphate carboxylase large chain, found in Fragaria ananassa (Strawberry).